The primary structure comprises 393 residues: Probable acetyl-CoA acetyltransferase (393 aa).

The Acyl-thioester intermediate role is filled by C88. Residues H348 and C378 each act as proton acceptor in the active site.

The protein belongs to the thiolase-like superfamily. Thiolase family.

Its subcellular location is the cytoplasm. The enzyme catalyses 2 acetyl-CoA = acetoacetyl-CoA + CoA. This Escherichia coli (strain K12) protein is Probable acetyl-CoA acetyltransferase (yqeF).